The primary structure comprises 379 residues: ATP phosphoribosyltransferase regulatory subunit (379 aa).

It belongs to the class-II aminoacyl-tRNA synthetase family. HisZ subfamily. As to quaternary structure, heteromultimer composed of HisG and HisZ subunits.

Its subcellular location is the cytoplasm. The protein operates within amino-acid biosynthesis; L-histidine biosynthesis; L-histidine from 5-phospho-alpha-D-ribose 1-diphosphate: step 1/9. Its function is as follows. Required for the first step of histidine biosynthesis. May allow the feedback regulation of ATP phosphoribosyltransferase activity by histidine. The polypeptide is ATP phosphoribosyltransferase regulatory subunit (Paramagnetospirillum magneticum (strain ATCC 700264 / AMB-1) (Magnetospirillum magneticum)).